A 627-amino-acid polypeptide reads, in one-letter code: Pheromone B alpha 2 receptor (627 aa).

At 1-7 (MLDPTYP) the chain is on the extracellular side. Residues 8–28 (AFPIFAFLGIVCCLVPLPWHL) traverse the membrane as a helical segment. Residues 29–35 (QSWNSGT) are Cytoplasmic-facing. Residues 36 to 56 (CFLMIWTAVACLNMFVNSIIW) form a helical membrane-spanning segment. The Extracellular segment spans residues 57–69 (KDHAQNVAPVWCE). Residues 70–90 (ISIRITLGASVGIPASSLCIV) traverse the membrane as a helical segment. Residues 91–102 (RRLYSIAKKFRA) are Cytoplasmic-facing. Residues 103 to 123 (VMVDALICVLFPILYIILQIV) traverse the membrane as a helical segment. Over 124–150 (VQGHRFNILENIGCFPAIINTPLTYPL) the chain is Extracellular. Residues 151–171 (TFMWPVLIGVISFIYSTLALI) form a helical membrane-spanning segment. Residues 172-197 (QFNRHRLQFTQFLHSNSTLSVSRYLR) are Cytoplasmic-facing. A helical membrane pass occupies residues 198 to 218 (LMALAMTEMMCTTPMGVFVII). The Extracellular segment spans residues 219–260 (LNAKATPVSPYVSWAVTHYGYGRIDQVPAIIWRSNRLLVASY). Residues 261–281 (ELTRWSSPAIALIFFFYFGFA) traverse the membrane as a helical segment. Residues 282-627 (QEARRNYAAA…ASPRTHRASV (346 aa)) lie on the Cytoplasmic side of the membrane. Disordered regions lie at residues 363–405 (LPRP…SSPI), 479–505 (TVPQHNTADEPASPALPDTPSSCSSSA), and 518–627 (LPST…RASV). A compositionally biased stretch (low complexity) spans 372–387 (SSSGFSSSDSTRFGSS). Polar residues-rich tracts occupy residues 519–533 (PSTTDVTRGTGSLPT) and 545–555 (SLSQLFGISSM). A compositionally biased stretch (low complexity) spans 569–607 (ATGTASPTTTAPAPASTTIAPASATMAPATTTTAPTTIA).

This sequence belongs to the G-protein coupled receptor 4 family.

The protein localises to the cell membrane. Receptor for the BAP2 pheromone, a prenylated mating factor. The receptor/pheromone interaction may have a role in the fusion of clamp cells. This chain is Pheromone B alpha 2 receptor (BAR2), found in Schizophyllum commune (Split gill fungus).